The following is a 307-amino-acid chain: Ribosomal RNA small subunit methyltransferase H (307 aa).

Residues 32–34 (GGH), Asp-52, Phe-78, Asp-99, and Gln-106 each bind S-adenosyl-L-methionine.

The protein belongs to the methyltransferase superfamily. RsmH family.

The protein resides in the cytoplasm. It catalyses the reaction cytidine(1402) in 16S rRNA + S-adenosyl-L-methionine = N(4)-methylcytidine(1402) in 16S rRNA + S-adenosyl-L-homocysteine + H(+). In terms of biological role, specifically methylates the N4 position of cytidine in position 1402 (C1402) of 16S rRNA. The sequence is that of Ribosomal RNA small subunit methyltransferase H from Acinetobacter baumannii (strain AB0057).